The sequence spans 67 residues: MLAMKSFSQVSKSYKASAPSKKLTTLFYVAYITLGLTTPFLLPARMASKDTHYYKDEFCSQRSYTRF.

This is an uncharacterized protein from Saccharomyces cerevisiae (strain ATCC 204508 / S288c) (Baker's yeast).